The primary structure comprises 129 residues: Follitropin subunit beta (129 aa).

Positions 1-20 (MKTVQFCFLFCCWKAICCNS) are cleaved as a signal peptide. Cystine bridges form between Cys21/Cys69, Cys35/Cys84, Cys38/Cys122, Cys46/Cys100, Cys50/Cys102, and Cys105/Cys112. N-linked (GlcNAc...) asparagine glycosylation is found at Asn25 and Asn42.

Belongs to the glycoprotein hormones subunit beta family. Heterodimer. The active follitropin is a heterodimer composed of an alpha chain/CGA shared with other hormones and a unique beta chain/FSHB shown here.

It is found in the secreted. Its function is as follows. Together with the alpha chain CGA constitutes follitropin, the follicle-stimulating hormone, and provides its biological specificity to the hormone heterodimer. Binds FSHR, a G protein-coupled receptor, on target cells to activate downstream signaling pathways. Follitropin is involved in follicle development and spermatogenesis in reproductive organs. The polypeptide is Follitropin subunit beta (FSHB) (Aotus nancymaae (Ma's night monkey)).